A 218-amino-acid chain; its full sequence is Phosphoribosylformylglycinamidine synthase subunit PurQ (218 aa).

Residues 2–218 (SIAVLRFPGT…GARMLRGLAC (217 aa)) form the Glutamine amidotransferase type-1 domain. Cys-86 serves as the catalytic Nucleophile. Active-site residues include His-195 and Glu-197.

Part of the FGAM synthase complex composed of 1 PurL, 1 PurQ and 2 PurS subunits.

The protein localises to the cytoplasm. The catalysed reaction is N(2)-formyl-N(1)-(5-phospho-beta-D-ribosyl)glycinamide + L-glutamine + ATP + H2O = 2-formamido-N(1)-(5-O-phospho-beta-D-ribosyl)acetamidine + L-glutamate + ADP + phosphate + H(+). It catalyses the reaction L-glutamine + H2O = L-glutamate + NH4(+). The protein operates within purine metabolism; IMP biosynthesis via de novo pathway; 5-amino-1-(5-phospho-D-ribosyl)imidazole from N(2)-formyl-N(1)-(5-phospho-D-ribosyl)glycinamide: step 1/2. Part of the phosphoribosylformylglycinamidine synthase complex involved in the purines biosynthetic pathway. Catalyzes the ATP-dependent conversion of formylglycinamide ribonucleotide (FGAR) and glutamine to yield formylglycinamidine ribonucleotide (FGAM) and glutamate. The FGAM synthase complex is composed of three subunits. PurQ produces an ammonia molecule by converting glutamine to glutamate. PurL transfers the ammonia molecule to FGAR to form FGAM in an ATP-dependent manner. PurS interacts with PurQ and PurL and is thought to assist in the transfer of the ammonia molecule from PurQ to PurL. This Wolinella succinogenes (strain ATCC 29543 / DSM 1740 / CCUG 13145 / JCM 31913 / LMG 7466 / NCTC 11488 / FDC 602W) (Vibrio succinogenes) protein is Phosphoribosylformylglycinamidine synthase subunit PurQ.